The primary structure comprises 149 residues: MPFDTKSIFPDFIVFPSAISTIAIGLWSVQAYKLGEARKRYNVKAPHVQGDPEFERIAHEYQNTSEALGAIIPATFMFSYYISPKCSLLLGGTWLVSKMLNCCSYCCKKEKENDCAKNVHTCLSHISFFALLGGSAFGIGSSLYNRYKL.

Helical transmembrane passes span 7-27 (SIFP…IGLW) and 123-143 (LSHI…GSSL).

It belongs to the MAPEG family.

The protein resides in the membrane. The catalysed reaction is RX + glutathione = an S-substituted glutathione + a halide anion + H(+). May perform the conjugation of reduced glutathione to electrophiles. This is Probable microsomal glutathione S-transferase (mgst) from Dictyostelium discoideum (Social amoeba).